Here is a 98-residue protein sequence, read N- to C-terminus: MALLLALSLLVLWTSPAPTLSGTNDAEDCCLSVTQKPIPGYIVRNFHYLLIKDGCRVPAVVFTTLRGRQLCAPPDQPWVERIIQRLQRTSAKMKRRSS.

The signal sequence occupies residues 1–21 (MALLLALSLLVLWTSPAPTLS). Disulfide bonds link Cys-29–Cys-55 and Cys-30–Cys-71.

It belongs to the intercrine beta (chemokine CC) family. As to quaternary structure, interacts with TNFAIP6 (via Link domain). Expressed at high levels in the lymph nodes, thymus and appendix. Intermediate levels seen in colon and trachea, while low levels found in spleen, small intestine, lung, kidney and stomach.

The protein resides in the secreted. May play a role not only in inflammatory and immunological responses but also in normal lymphocyte recirculation and homing. May play an important role in trafficking of T-cells in thymus, and T-cell and B-cell migration to secondary lymphoid organs. Binds to chemokine receptor CCR7. Recombinant CCL19 shows potent chemotactic activity for T-cells and B-cells but not for granulocytes and monocytes. Binds to atypical chemokine receptor ACKR4 and mediates the recruitment of beta-arrestin (ARRB1/2) to ACKR4. This Homo sapiens (Human) protein is C-C motif chemokine 19 (CCL19).